A 520-amino-acid polypeptide reads, in one-letter code: 6-phosphofructo-2-kinase/fructose-2,6-bisphosphatase 3 (520 aa).

The segment at 1–245 (MPLELTQSRV…VYYLMNIHVQ (245 aa)) is 6-phosphofructo-2-kinase. 42–50 (GLPARGKTY) is an ATP binding site. Beta-D-fructose 6-phosphate is bound by residues Arg-75 and Arg-99. The active site involves Asp-125. Beta-D-fructose 6-phosphate is bound by residues Thr-127 and Arg-133. Residue Cys-155 is part of the active site. 164–169 (NIMEVK) lines the ATP pocket. Beta-D-fructose 6-phosphate is bound by residues Lys-169, Arg-190, and Tyr-194. The interval 246-520 (PRTIYLCRHG…RSSADSSRKH (275 aa)) is fructose-2,6-bisphosphatase. Arg-253 is a beta-D-fructose 2,6-bisphosphate binding site. The active-site Tele-phosphohistidine intermediate is His-254. 2 residues coordinate beta-D-fructose 2,6-bisphosphate: Asn-260 and Gly-266. The active-site Proton donor/acceptor is Glu-323. Beta-D-fructose 2,6-bisphosphate-binding residues include Tyr-334, Arg-348, Lys-352, Tyr-363, Gln-389, and Arg-393. Position 345–348 (345–348 (YALR)) interacts with ATP. ATP is bound by residues 389–393 (QAVLR) and Tyr-425. Residues 443–520 (RERSEDAKKG…RSSADSSRKH (78 aa)) form a disordered region. Ser-461 carries the post-translational modification Phosphoserine; by AMPK. Phosphothreonine is present on Thr-463. Ser-467 bears the Phosphoserine mark. Thr-471 bears the Phosphothreonine; by PKC mark. A compositionally biased stretch (polar residues) spans 502 to 520 (LPGQNMKGSRSSADSSRKH).

It in the C-terminal section; belongs to the phosphoglycerate mutase family. As to quaternary structure, homodimer. Forms a heterodimer with PFKFB2. Phosphorylation by AMPK stimulates activity. Ubiquitous.

The enzyme catalyses beta-D-fructose 2,6-bisphosphate + H2O = beta-D-fructose 6-phosphate + phosphate. It catalyses the reaction beta-D-fructose 6-phosphate + ATP = beta-D-fructose 2,6-bisphosphate + ADP + H(+). Functionally, catalyzes both the synthesis and degradation of fructose 2,6-bisphosphate. The chain is 6-phosphofructo-2-kinase/fructose-2,6-bisphosphatase 3 (PFKFB3) from Homo sapiens (Human).